The sequence spans 145 residues: MYPAHLLVLLAVCVSLLGASTIPPLPLNLVQFTYLIQCANKGSRASYHYADYGCYCGAGGSGTPVDELDRCCKVHDDCYGEAEKMGCYPKLTMYNYYCGTEGPYCNTKTDCQRYVCACDLQAAKCFARSPYNNKNYNIDTSKRCK.

The signal sequence occupies residues 1–21 (MYPAHLLVLLAVCVSLLGAST). A propeptide spanning residues 22-27 (IPPLPL) is cleaved from the precursor. 7 cysteine pairs are disulfide-bonded: cysteine 38/cysteine 98, cysteine 54/cysteine 144, cysteine 56/cysteine 72, cysteine 71/cysteine 125, cysteine 78/cysteine 118, cysteine 87/cysteine 111, and cysteine 105/cysteine 116. Residues tyrosine 55, glycine 57, and glycine 59 each coordinate Ca(2+). The active site involves histidine 75. Aspartate 76 is a Ca(2+) binding site. The active site involves aspartate 119.

This sequence belongs to the phospholipase A2 family. Group I subfamily. D49 sub-subfamily. It depends on Ca(2+) as a cofactor. In terms of tissue distribution, expressed by the venom gland.

It localises to the secreted. It carries out the reaction a 1,2-diacyl-sn-glycero-3-phosphocholine + H2O = a 1-acyl-sn-glycero-3-phosphocholine + a fatty acid + H(+). PLA2 catalyzes the calcium-dependent hydrolysis of the 2-acyl groups in 3-sn-phosphoglycerides. In Laticauda semifasciata (Black-banded sea krait), this protein is Basic phospholipase A2 cPt09.